Here is a 917-residue protein sequence, read N- to C-terminus: Dolichyl-phosphooligosaccharide-protein glycotransferase (917 aa).

Basic and acidic residues predominate over residues 1–10 (MTENNEKVKN). The interval 1-20 (MTENNEKVKNSDSANNQSSK) is disordered. Over 1-38 (MTENNEKVKNSDSANNQSSKNSKFNFNFEDKKVKCAKT) the chain is Cytoplasmic. Low complexity predominate over residues 11-20 (SDSANNQSSK). A helical transmembrane segment spans residues 39-59 (ILIIIFLAFLSFQMRAQTADM). Topologically, residues 60–154 (GFTTNEQYLD…AMDSTVTLMN (95 aa)) are extracellular. The DXD motif 1 signature appears at 82-84 (ALD). Asp84 lines the Mn(2+) pocket. The chain crosses the membrane as a helical span at residues 155-175 (AAFWVPAILSMFLITPIFFTV). Residues 176-182 (RRITSSD) lie on the Cytoplasmic side of the membrane. The chain crosses the membrane as a helical span at residues 183 to 203 (IGGAVAAILASLSPSIFVKTV). At 204-209 (AGFSDT) the chain is on the extracellular side. A Mn(2+)-binding site is contributed by Asp208. The short motif at 208–210 (DTP) is the DXD motif 2 element. The chain crosses the membrane as a helical span at residues 210-230 (PILEILPLLFIVWFIIEAIHY). At 231 to 237 (SKEKNYK) the chain is on the cytoplasmic side. Residues 238 to 260 (SLIYGLLATLMLALYPFMWSAWW) form a helical membrane-spanning segment. Over 261-263 (YGY) the chain is Extracellular. Residues 264–286 (YIVIAFLVIYAIYKGISYNSIAK) form a helical membrane-spanning segment. The Cytoplasmic segment spans residues 287–308 (YTKSKNNNHKDKIESEKLEMLN). A helical membrane pass occupies residues 309–329 (ILKISGLFIIGGAVLITALYG). At 330-372 (VSTTMNALQAPLNYLGLDEVSSQTGWPNVLTTVSELDTASLDE) the chain is on the extracellular side. Positions 361–364 (TVSE) match the TIXE motif motif. Glu364 lines the Mn(2+) pocket. Residues 373 to 393 (IISSSLGSIHLFAIGLIGIFL) traverse the membrane as a helical segment. At 394 to 413 (SLFRKVLTPVKQISNGLAEK) the chain is on the cytoplasmic side. Residues 414 to 434 (LDIKYALLLIIWFAVTFLAAS) traverse the membrane as a helical segment. Topologically, residues 435-438 (KGVR) are extracellular. Position 438 (Arg438) interacts with a glycophospholipid. Residues 439–459 (FVALMVPPLSIGVGIFVGFIE) traverse the membrane as a helical segment. Topologically, residues 460-469 (QFIKNNLDKK) are cytoplasmic. Residues 470–490 (YEYVAYPTIAIIVLYALFTIY) traverse the membrane as a helical segment. The Extracellular segment spans residues 491–506 (RADSADLVRMLLPSNY). A helical transmembrane segment spans residues 507 to 527 (VPIAEGIMLASLAVLIIYKVA). Topologically, residues 528–541 (ELIAESNKKLVMNK) are cytoplasmic. The chain crosses the membrane as a helical span at residues 542–562 (IFMILLAIGLITPTIATIVPF). Topologically, residues 563–917 (YSVPTYNDGW…FSVDYGNYSK (355 aa)) are extracellular. Residues 592–594 (WWD) form an interacts with target acceptor peptide in protein substrate region. Positions 592 to 596 (WWDNG) match the WWDYG motif motif. Residues 719–726 (MTSIASVW) carry the MI motif motif.

This sequence belongs to the STT3 family. Mn(2+) is required as a cofactor. The cofactor is Mg(2+).

The protein localises to the cell membrane. The catalysed reaction is an archaeal dolichyl phosphooligosaccharide + [protein]-L-asparagine = an archaeal dolichyl phosphate + a glycoprotein with the oligosaccharide chain attached by N-beta-D-glycosyl linkage to a protein L-asparagine.. The protein operates within cell surface structure biogenesis; S-layer biogenesis. It participates in protein modification; protein glycosylation. Its function is as follows. Oligosaccharyl transferase (OST) that catalyzes the initial transfer of a defined glycan (ManNAcGlc-2,3-diNAcAGlcNAc in M.voltae) from the lipid carrier dolichol-monophosphate to an asparagine residue within an Asn-X-Ser/Thr consensus motif in nascent polypeptide chains, the first step in protein N-glycosylation. Involved in the assembly of an N-linked disaccharide that decorates the S-layer glycoprotein and flagellins. The polypeptide is Dolichyl-phosphooligosaccharide-protein glycotransferase (Methanococcus voltae).